A 521-amino-acid polypeptide reads, in one-letter code: Glucomannan 4-beta-mannosyltransferase 1 (521 aa).

The helical transmembrane segment at 22–42 (VIVPLLRLAVAVCLTMSVLLF) threads the bilayer. Asp-123 is a catalytic residue. Substrate is bound by residues Asp-182 and Asp-184. Asp-276 is an active-site residue. 4 consecutive transmembrane segments (helical) span residues 355 to 375 (IIAH…TIFV), 391 to 411 (IITL…FFWI), 471 to 491 (VTEL…LAFG), and 495 to 515 (FFIY…GYVG).

Belongs to the glycosyltransferase 2 family. Plant cellulose synthase-like A subfamily.

The protein resides in the golgi apparatus membrane. The catalysed reaction is GDP-mannose + (glucomannan)n = GDP + (glucomannan)n+1.. Functionally, possesses glucomannan synthase and mannan synthase activities in vitro. Mannan synthase consists of a 4-beta-mannosyltransferase activity on mannan using GDP-mannose. The beta-1,4-mannan product is the backbone for galactomannan synthesis by galactomannan galactosyltransferase. Galactomannan is a noncellulosic polysaccharides of plant cell wall. This Oryza sativa subsp. japonica (Rice) protein is Glucomannan 4-beta-mannosyltransferase 1.